A 228-amino-acid polypeptide reads, in one-letter code: Nuclear phosphoprotein UL3 homolog (228 aa).

This sequence belongs to the alphaherpesvirinae HHV-1 UL3 family. In terms of processing, phosphorylated.

It localises to the host nucleus. In Gallus gallus (Chicken), this protein is Nuclear phosphoprotein UL3 homolog (MDV015).